The sequence spans 211 residues: tRNA (guanine-N(7)-)-methyltransferase (211 aa).

Residues Glu-43, Asp-68, Asn-95, and Asn-117 each contribute to the S-adenosyl-L-methionine site. Lys-121 contacts substrate. Positions 123–128 are interaction with RNA; that stretch reads RHNKRR. Substrate contacts are provided by residues Asp-153 and 190–193; that span reads TEYE.

It belongs to the class I-like SAM-binding methyltransferase superfamily. TrmB family.

It carries out the reaction guanosine(46) in tRNA + S-adenosyl-L-methionine = N(7)-methylguanosine(46) in tRNA + S-adenosyl-L-homocysteine. It functions in the pathway tRNA modification; N(7)-methylguanine-tRNA biosynthesis. Functionally, catalyzes the formation of N(7)-methylguanine at position 46 (m7G46) in tRNA. In Clostridium tetani (strain Massachusetts / E88), this protein is tRNA (guanine-N(7)-)-methyltransferase.